We begin with the raw amino-acid sequence, 970 residues long: Sodium/calcium exchanger 1 (970 aa).

An N-terminal signal peptide occupies residues 1–32 (MLQFSLSPTLSMGFHVIAMVALLFSHVDHISA). Residues 33-71 (ETEMEGEGNETGECTGSYYCKKGVILPIWEPQDPSFGDK) lie on the Extracellular side of the membrane. N-linked (GlcNAc...) asparagine glycosylation is present at Asn41. A helical membrane pass occupies residues 72–92 (IARATVYFVAMVYMFLGVSII). Residues 93–133 (ADRFMSSIEVITSQEKEITIKKPNGETTKTTVRIWNETVSN) are Cytoplasmic-facing. A helical transmembrane segment spans residues 134–154 (LTLMALGSSAPEILLSVIEVC). Residues 138 to 178 (ALGSSAPEILLSVIEVCGHNFTAGDLGPSTIVGSAAFNMFI) form an Alpha-1 repeat. Over 155–167 (GHNFTAGDLGPST) the chain is Extracellular. An N-linked (GlcNAc...) asparagine glycan is attached at Asn157. A helical membrane pass occupies residues 168–188 (IVGSAAFNMFIIIALCVYVVP). At 189–201 (DGETRKIKHLRVF) the chain is on the cytoplasmic side. The chain crosses the membrane as a helical span at residues 202–222 (FVTAAWSIFAYTWLYIILSVS). At 223 to 228 (SPGVVE) the chain is on the extracellular side. A helical transmembrane segment spans residues 229–249 (VWEGLLTFFFFPICVVFAWVA). Over 250-797 (DRRLLFYKYV…FVPPTEYWNG (548 aa)) the chain is Cytoplasmic. The putative calmodulin-binding region stretch occupies residues 251 to 270 (RRLLFYKYVYKRYRAGKQRG). 2 positions are modified to phosphoserine: Ser282 and Ser389. 2 Calx-beta domains span residues 393–493 (VNTE…VHLS) and 524–624 (ATVT…LEIG). 16 residues coordinate Ca(2+): Glu417, Asp453, Asp478, Asp479, Ile481, Glu483, Glu486, Asp530, Asp531, Asp532, Glu548, Asp584, Asp610, Glu611, Glu612, and Glu715. A helical transmembrane segment spans residues 798-818 (WACFIVSILMIGLLTAFIGDL). Residues 819–821 (ASH) lie on the Extracellular side of the membrane. Residues 822–842 (FACTIALKDSVTAVVFVALGT) form a helical membrane-spanning segment. Residues 839 to 875 (ALGTSVPDTFASKVAATQDQYADASIGNVTGSNAVNV) form an Alpha-2 repeat. The Cytoplasmic portion of the chain corresponds to 843 to 871 (SVPDTFASKVAATQDQYADASIGNVTGSN). The helical transmembrane segment at 872-892 (AVNVFLGIGVAWSIAAIYHAA) threads the bilayer. Residues 893–903 (NGEQFKVSPGT) lie on the Extracellular side of the membrane. A helical transmembrane segment spans residues 904–924 (LAFSVTLFTIFAFINVGVLLY). The Cytoplasmic segment spans residues 925 to 941 (RRRPEIGGELGGPRTAK). Residues 942–962 (LLTSCLFVLLWLLYIFFSSLE) traverse the membrane as a helical segment. The Extracellular segment spans residues 963–970 (AYCHIKGF).

It belongs to the Ca(2+):cation antiporter (CaCA) (TC 2.A.19) family. SLC8 subfamily.

The protein localises to the cell membrane. It catalyses the reaction Ca(2+)(in) + 3 Na(+)(out) = Ca(2+)(out) + 3 Na(+)(in). With respect to regulation, activated by micromolar levels of Ca(2+). In terms of biological role, mediates the exchange of one Ca(2+) ion against three to four Na(+) ions across the cell membrane, and thereby contributes to the regulation of cytoplasmic Ca(2+) levels and Ca(2+)-dependent cellular processes. Contributes to Ca(2+) transport during excitation-contraction coupling in muscle. In a first phase, voltage-gated channels mediate the rapid increase of cytoplasmic Ca(2+) levels due to release of Ca(2+) stores from the endoplasmic reticulum. SLC8A1 mediates the export of Ca(2+) from the cell during the next phase, so that cytoplasmic Ca(2+) levels rapidly return to baseline. Required for normal embryonic heart development and the onset of heart contractions. This Bos taurus (Bovine) protein is Sodium/calcium exchanger 1 (SLC8A1).